The sequence spans 213 residues: Putative thymidylate kinase 251L (213 aa).

21-28 (GCDKTGKS) contributes to the ATP binding site.

The protein belongs to the thymidylate kinase family.

The catalysed reaction is dTMP + ATP = dTDP + ADP. Its pathway is pyrimidine metabolism; dTTP biosynthesis. In terms of biological role, catalyzes the conversion of dTMP to dTDP. The chain is Putative thymidylate kinase 251L from Acheta domesticus (House cricket).